Here is a 252-residue protein sequence, read N- to C-terminus: Small ribosomal subunit protein uS3 (252 aa).

The KH type-2 domain occupies 39–110; that stretch reads IRKALMKELK…EVKINVVEIK (72 aa). Positions 218–252 are disordered; sequence TSDEKPKFEKRDFNRSNNNRRDQAPKSHPVAKEAK. Over residues 219 to 252 the composition is skewed to basic and acidic residues; sequence SDEKPKFEKRDFNRSNNNRRDQAPKSHPVAKEAK.

The protein belongs to the universal ribosomal protein uS3 family. Part of the 30S ribosomal subunit. Forms a tight complex with proteins S10 and S14.

Its function is as follows. Binds the lower part of the 30S subunit head. Binds mRNA in the 70S ribosome, positioning it for translation. This is Small ribosomal subunit protein uS3 from Spiroplasma citri.